The following is a 298-amino-acid chain: Urease accessory protein UreD (298 aa).

It belongs to the UreD family. In terms of assembly, ureD, UreF and UreG form a complex that acts as a GTP-hydrolysis-dependent molecular chaperone, activating the urease apoprotein by helping to assemble the nickel containing metallocenter of UreC. The UreE protein probably delivers the nickel.

It is found in the cytoplasm. In terms of biological role, required for maturation of urease via the functional incorporation of the urease nickel metallocenter. The sequence is that of Urease accessory protein UreD from Marinobacter nauticus (strain ATCC 700491 / DSM 11845 / VT8) (Marinobacter aquaeolei).